Reading from the N-terminus, the 84-residue chain is Large ribosomal subunit protein bL31B (84 aa).

This sequence belongs to the bacterial ribosomal protein bL31 family. Type B subfamily. In terms of assembly, part of the 50S ribosomal subunit.

This Phocaeicola vulgatus (strain ATCC 8482 / DSM 1447 / JCM 5826 / CCUG 4940 / NBRC 14291 / NCTC 11154) (Bacteroides vulgatus) protein is Large ribosomal subunit protein bL31B.